Reading from the N-terminus, the 906-residue chain is Protein translocase subunit SecA (906 aa).

Residues Gln-86, 104–108 (GEGKT), and Asp-511 contribute to the ATP site. Composition is skewed to basic and acidic residues over residues 853 to 865 (HESV…RHDE) and 877 to 888 (VRREGPKVKRND). Residues 853–906 (HESVIDNNQRHDEDEQEEAPKVQQVRREGPKVKRNDPCPCGSGKKYKQCHGKVE) form a disordered region. 4 residues coordinate Zn(2+): Cys-890, Cys-892, Cys-901, and His-902. Basic residues predominate over residues 896-906 (KKYKQCHGKVE).

It belongs to the SecA family. Monomer and homodimer. Part of the essential Sec protein translocation apparatus which comprises SecA, SecYEG and auxiliary proteins SecDF-YajC and YidC. Requires Zn(2+) as cofactor.

The protein localises to the cell inner membrane. It localises to the cytoplasm. The enzyme catalyses ATP + H2O + cellular proteinSide 1 = ADP + phosphate + cellular proteinSide 2.. Part of the Sec protein translocase complex. Interacts with the SecYEG preprotein conducting channel. Has a central role in coupling the hydrolysis of ATP to the transfer of proteins into and across the cell membrane, serving both as a receptor for the preprotein-SecB complex and as an ATP-driven molecular motor driving the stepwise translocation of polypeptide chains across the membrane. The sequence is that of Protein translocase subunit SecA from Francisella tularensis subsp. holarctica (strain FTNF002-00 / FTA).